Here is a 329-residue protein sequence, read N- to C-terminus: Peroxidase 30 (329 aa).

A signal peptide spans 1–27 (MKTMTQLNIAVVVVVTVLIGMLRSSEA). Disulfide bonds link C38-C116, C71-C76, C122-C324, and C201-C234. The Proton acceptor role is filled by H69. Ca(2+) contacts are provided by D70, V73, G75, D77, and S79. Residues N83 and N155 are each glycosylated (N-linked (GlcNAc...) asparagine). The tract at residues 141–165 (SWSVPTGRRDGRISNKTEATNNIPP) is disordered. Polar residues predominate over residues 156–165 (KTEATNNIPP). P164 contacts substrate. N-linked (GlcNAc...) asparagine glycosylation occurs at N169. H194 provides a ligand contact to heme b. Ca(2+) is bound at residue T195. Residues N210 and N240 are each glycosylated (N-linked (GlcNAc...) asparagine). Ca(2+) contacts are provided by D247, S250, and D255. N-linked (GlcNAc...) asparagine glycosylation occurs at N290.

This sequence belongs to the peroxidase family. Classical plant (class III) peroxidase subfamily. Heme b serves as cofactor. It depends on Ca(2+) as a cofactor. As to expression, mainly expressed in roots.

Its subcellular location is the secreted. The catalysed reaction is 2 a phenolic donor + H2O2 = 2 a phenolic radical donor + 2 H2O. Functionally, removal of H(2)O(2), oxidation of toxic reductants, biosynthesis and degradation of lignin, suberization, auxin catabolism, response to environmental stresses such as wounding, pathogen attack and oxidative stress. These functions might be dependent on each isozyme/isoform in each plant tissue. The protein is Peroxidase 30 (PER30) of Arabidopsis thaliana (Mouse-ear cress).